A 478-amino-acid polypeptide reads, in one-letter code: Glycogen synthase (478 aa).

Lys-15 lines the ADP-alpha-D-glucose pocket.

This sequence belongs to the glycosyltransferase 1 family. Bacterial/plant glycogen synthase subfamily.

It catalyses the reaction [(1-&gt;4)-alpha-D-glucosyl](n) + ADP-alpha-D-glucose = [(1-&gt;4)-alpha-D-glucosyl](n+1) + ADP + H(+). The protein operates within glycan biosynthesis; glycogen biosynthesis. Its function is as follows. Synthesizes alpha-1,4-glucan chains using ADP-glucose. The protein is Glycogen synthase of Caldicellulosiruptor bescii (strain ATCC BAA-1888 / DSM 6725 / KCTC 15123 / Z-1320) (Anaerocellum thermophilum).